The following is a 662-amino-acid chain: Zinc finger protein 17 (662 aa).

The KRAB domain occupies 8-101; it reads MVFEDVAIHF…LLKDILHLAE (94 aa). C2H2-type zinc fingers lie at residues 190-212, 218-240, 246-268, 274-296, 302-324, 358-380, 386-408, 414-436, 442-464, 470-492, 498-520, 526-548, 554-576, 582-604, 610-632, and 638-660; these read YSCT…QKIH, YECS…QRNH, YKCS…QKIH, YECS…QRIH, YVCS…QKIH, FYCC…QRVH, YECN…QKVH, YECS…QRVH, YECN…QRVH, FECS…QRIH, YECS…RRNH, FECT…QKVH, YKCS…ERVH, YECS…RRIH, and YQCS…QKVH.

The protein belongs to the krueppel C2H2-type zinc-finger protein family.

It localises to the nucleus. Functionally, may be involved in transcriptional regulation. The chain is Zinc finger protein 17 (ZNF17) from Homo sapiens (Human).